The chain runs to 270 residues: Shikimate dehydrogenase (NADP(+)) (270 aa).

Shikimate is bound by residues 15-17 (SLS) and Thr-62. Lys-66 functions as the Proton acceptor in the catalytic mechanism. Residues Asn-87 and Asp-102 each coordinate shikimate. NADP(+) is bound by residues 126 to 130 (GAGGS), 149 to 154 (NRTVGR), and Ile-210. Tyr-212 is a shikimate binding site. Residue Gly-233 participates in NADP(+) binding.

Belongs to the shikimate dehydrogenase family. Homodimer.

It carries out the reaction shikimate + NADP(+) = 3-dehydroshikimate + NADPH + H(+). It participates in metabolic intermediate biosynthesis; chorismate biosynthesis; chorismate from D-erythrose 4-phosphate and phosphoenolpyruvate: step 4/7. Involved in the biosynthesis of the chorismate, which leads to the biosynthesis of aromatic amino acids. Catalyzes the reversible NADPH linked reduction of 3-dehydroshikimate (DHSA) to yield shikimate (SA). This chain is Shikimate dehydrogenase (NADP(+)), found in Hyphomonas neptunium (strain ATCC 15444).